The following is a 319-amino-acid chain: tRNA pseudouridine synthase B (319 aa).

Asp49 (nucleophile) is an active-site residue.

This sequence belongs to the pseudouridine synthase TruB family. Type 1 subfamily.

The catalysed reaction is uridine(55) in tRNA = pseudouridine(55) in tRNA. In terms of biological role, responsible for synthesis of pseudouridine from uracil-55 in the psi GC loop of transfer RNAs. The sequence is that of tRNA pseudouridine synthase B from Aeromonas salmonicida (strain A449).